The chain runs to 658 residues: Threonine--tRNA ligase (658 aa).

The TGS domain occupies M1–T64. A catalytic region spans residues D246 to P548. Zn(2+) is bound by residues C343, H394, and H525.

Belongs to the class-II aminoacyl-tRNA synthetase family. In terms of assembly, homodimer. Requires Zn(2+) as cofactor.

It localises to the cytoplasm. It catalyses the reaction tRNA(Thr) + L-threonine + ATP = L-threonyl-tRNA(Thr) + AMP + diphosphate + H(+). In terms of biological role, catalyzes the attachment of threonine to tRNA(Thr) in a two-step reaction: L-threonine is first activated by ATP to form Thr-AMP and then transferred to the acceptor end of tRNA(Thr). Also edits incorrectly charged L-seryl-tRNA(Thr). This chain is Threonine--tRNA ligase, found in Brucella melitensis biotype 1 (strain ATCC 23456 / CCUG 17765 / NCTC 10094 / 16M).